Here is a 507-residue protein sequence, read N- to C-terminus: Histidine ammonia-lyase (507 aa).

Positions 143-145 (SSG) form a cross-link, 5-imidazolinone (Ser-Gly). Residue Ser-144 is modified to 2,3-didehydroalanine (Ser).

It belongs to the PAL/histidase family. Contains an active site 4-methylidene-imidazol-5-one (MIO), which is formed autocatalytically by cyclization and dehydration of residues Ser-Ser-Gly.

The protein localises to the cytoplasm. It catalyses the reaction L-histidine = trans-urocanate + NH4(+). It functions in the pathway amino-acid degradation; L-histidine degradation into L-glutamate; N-formimidoyl-L-glutamate from L-histidine: step 1/3. The protein is Histidine ammonia-lyase of Alkaliphilus metalliredigens (strain QYMF).